The following is a 715-amino-acid chain: Polyribonucleotide nucleotidyltransferase (715 aa).

The Mg(2+) site is built by aspartate 488 and aspartate 494. The 60-residue stretch at 555-614 (PRIEVMHIPTDKIRDVIGTGGKVIREIVEKTGAKINIEDDGTVKIASSNGKEIEAARKWI) folds into the KH domain. In terms of domain architecture, S1 motif spans 624–692 (GEIYEGTVVK…ERGKVRLSMK (69 aa)).

The protein belongs to the polyribonucleotide nucleotidyltransferase family. The cofactor is Mg(2+).

The protein localises to the cytoplasm. The catalysed reaction is RNA(n+1) + phosphate = RNA(n) + a ribonucleoside 5'-diphosphate. Functionally, involved in mRNA degradation. Catalyzes the phosphorolysis of single-stranded polyribonucleotides processively in the 3'- to 5'-direction. The chain is Polyribonucleotide nucleotidyltransferase from Chelativorans sp. (strain BNC1).